The sequence spans 145 residues: Succinate dehydrogenase assembly factor 2, mitochondrial (145 aa).

Belongs to the SDHAF2 family. In terms of assembly, interacts with the flavoprotein subunit within the SDH catalytic dimer.

Its subcellular location is the mitochondrion matrix. In terms of biological role, plays an essential role in the assembly of succinate dehydrogenase (SDH), an enzyme complex (also referred to as respiratory complex II) that is a component of both the tricarboxylic acid (TCA) cycle and the mitochondrial electron transport chain, and which couples the oxidation of succinate to fumarate with the reduction of ubiquinone (coenzyme Q) to ubiquinol. Required for flavinylation (covalent attachment of FAD) of the flavoprotein subunit of the SDH catalytic dimer. The sequence is that of Succinate dehydrogenase assembly factor 2, mitochondrial from Yarrowia lipolytica (strain CLIB 122 / E 150) (Yeast).